Here is a 290-residue protein sequence, read N- to C-terminus: Probable branched-chain-amino-acid aminotransferase (290 aa).

Lysine 155 carries the post-translational modification N6-(pyridoxal phosphate)lysine.

Belongs to the class-IV pyridoxal-phosphate-dependent aminotransferase family. The cofactor is pyridoxal 5'-phosphate.

The catalysed reaction is L-leucine + 2-oxoglutarate = 4-methyl-2-oxopentanoate + L-glutamate. It carries out the reaction L-isoleucine + 2-oxoglutarate = (S)-3-methyl-2-oxopentanoate + L-glutamate. It catalyses the reaction L-valine + 2-oxoglutarate = 3-methyl-2-oxobutanoate + L-glutamate. The protein operates within amino-acid biosynthesis; L-isoleucine biosynthesis; L-isoleucine from 2-oxobutanoate: step 4/4. It functions in the pathway amino-acid biosynthesis; L-leucine biosynthesis; L-leucine from 3-methyl-2-oxobutanoate: step 4/4. Its pathway is amino-acid biosynthesis; L-valine biosynthesis; L-valine from pyruvate: step 4/4. Acts on leucine, isoleucine and valine. This chain is Probable branched-chain-amino-acid aminotransferase (ilvE), found in Rickettsia felis (strain ATCC VR-1525 / URRWXCal2) (Rickettsia azadi).